The chain runs to 300 residues: ADP,ATP carrier protein 2 (300 aa).

3 Solcar repeats span residues 8–100 (VAFI…YKQV), 113–203 (RYFI…ARGM), and 214–299 (VSWA…IKKV). A run of 5 helical transmembrane segments spans residues 10–39 (FIKD…LLLQ), 77–101 (LANV…KQVF), 112–132 (TRYF…SLCF), 181–201 (VSVQ…DTAR), and 213–233 (YVSW…SYPF). ADP is bound by residues arginine 82 and lysine 94. Residue arginine 237 participates in ADP binding. Residues 237–242 (RRRMMM) form an important for transport activity region. The Nucleotide carrier signature motif motif lies at 237–242 (RRRMMM). Residues 276–293 (AFSNVLRGTGGAFVLVLY) form a helical membrane-spanning segment.

The protein belongs to the mitochondrial carrier (TC 2.A.29) family. As to quaternary structure, monomer.

It localises to the mitochondrion inner membrane. It carries out the reaction ADP(in) + ATP(out) = ADP(out) + ATP(in). The matrix-open state (m-state) is inhibited by the membrane-permeable bongkrekic acid (BKA). The cytoplasmic-open state (c-state) is inhibited by the membrane-impermeable toxic inhibitor carboxyatractyloside (CATR). Functionally, ADP:ATP antiporter that mediates import of ADP into the mitochondrial matrix for ATP synthesis, and export of ATP out to fuel the cell. Cycles between the cytoplasmic-open state (c-state) and the matrix-open state (m-state): operates by the alternating access mechanism with a single substrate-binding site intermittently exposed to either the cytosolic (c-state) or matrix (m-state) side of the inner mitochondrial membrane. The polypeptide is ADP,ATP carrier protein 2 (Anopheles gambiae (African malaria mosquito)).